Here is a 146-residue protein sequence, read N- to C-terminus: Leghemoglobin Lb120-34 (146 aa).

The Globin domain occupies 2–146 (GFTEKQEALV…LASAIKKAMN (145 aa)). Nitrated tyrosine occurs at positions 24 and 29. Ser-44 is a binding site for heme b. A Phosphoserine modification is found at Ser-44. His-61 contributes to the O2 binding site. 3 residues coordinate heme b: Lys-64, His-93, and Lys-96. Tyr-134 bears the Nitrated tyrosine mark.

The protein belongs to the plant globin family. As to quaternary structure, monomer. Nitrated in effective nodules and particularly in hypoxic conditions; this mechanism may play a protective role in the symbiosis by buffering toxic peroxynitrite NO(2)(-). Nitration level decrease during nodule senescence. In terms of processing, phosphorylation at Ser-44 disrupts the molecular environment of its porphyrin ring oxygen binding pocket, thus leading to a reduced oxygen consumption and to the delivery of oxygen O(2) to symbiosomes. Root nodules.

It is found in the cytoplasm. It localises to the cytosol. Its subcellular location is the nucleus. Functionally, leghemoglobin that reversibly binds oxygen O(2) through a pentacoordinated heme iron. In root nodules, facilitates the diffusion of oxygen to the bacteroids while preventing the bacterial nitrogenase from being inactivated by buffering dioxygen, nitric oxide and carbon monoxide, and promoting the formation of reactive oxygen species (ROS, e.g. H(2)O(2)). This role is essential for symbiotic nitrogen fixation (SNF). In Pisum sativum (Garden pea), this protein is Leghemoglobin Lb120-34.